A 341-amino-acid polypeptide reads, in one-letter code: MASEAPPFWWEEPDWKVLALSPLSAVYALVAGRVMRRARREKIEAPVLCVGNFTVGGTGKTPVAIALAQQAKRMQLKPGFLSRGHGGSFAEPHVVDAHHDAAKHVGDEPLLLAEHAPVAVTPNRAAGARLLMAKHGCDFLIMDDGFQSARIHIDYALIVVDARYGIGNGRVIPGGPLRAKIVDQLVFTSGLLKMGEGTAADAVVRQAARAGRPIFEARAEPISKAGLAGKRFLAFAGIGHPDKFFDTVREAGGEVVLSKPFPDHHFYAEDELAELAAVARAEGLGLITTAKDAARLRHGASQDFLNRLEVLEIDTVFELDHAPERIIEETLDAWRQRKLRS.

54 to 61 (TVGGTGKT) is an ATP binding site.

It belongs to the LpxK family.

It catalyses the reaction a lipid A disaccharide + ATP = a lipid IVA + ADP + H(+). It participates in glycolipid biosynthesis; lipid IV(A) biosynthesis; lipid IV(A) from (3R)-3-hydroxytetradecanoyl-[acyl-carrier-protein] and UDP-N-acetyl-alpha-D-glucosamine: step 6/6. In terms of biological role, transfers the gamma-phosphate of ATP to the 4'-position of a tetraacyldisaccharide 1-phosphate intermediate (termed DS-1-P) to form tetraacyldisaccharide 1,4'-bis-phosphate (lipid IVA). The sequence is that of Tetraacyldisaccharide 4'-kinase from Mesorhizobium japonicum (strain LMG 29417 / CECT 9101 / MAFF 303099) (Mesorhizobium loti (strain MAFF 303099)).